The chain runs to 244 residues: Inner kinetochore subunit fta7 (244 aa).

It belongs to the CENP-Q/OKP1 family. As to quaternary structure, component of the heterotetrameric kinetochore subcomplex COMA, which consists of fta2, fta7, mal2 and mis17. The COMA subcomplex is part of a larger constitutive centromere-associated network (CCAN) (also known as central kinetochore Sim4 complex in fission yeast), which is composed of at least cnl2, cnp3, cnp20, fta1, fta2, fta3, fta4, fta6, fta7, mal2, mhf1, mhf2, mis6, mis15, mis17, sim4 and wip1.

The protein resides in the nucleus. It localises to the chromosome. The protein localises to the centromere. It is found in the kinetochore. Its subcellular location is the cytoplasm. The protein resides in the cytoskeleton. It localises to the microtubule organizing center. The protein localises to the spindle pole body. Its function is as follows. Component of the kinetochore, a multiprotein complex that assembles on centromeric DNA and attaches chromosomes to spindle microtubules, mediating chromosome segregation and sister chromatid segregation during meiosis and mitosis. Component of the inner kinetochore COMA complex, which connects centromere-associated proteins and the outer kinetochore. COMA interacts with other inner kinetochore proteins to form the inner kinetochore constitutive centromere-associated network (CCAN), which serves as a structural platform for outer kinetochore assembly. The sequence is that of Inner kinetochore subunit fta7 (fta7) from Schizosaccharomyces pombe (strain 972 / ATCC 24843) (Fission yeast).